A 398-amino-acid polypeptide reads, in one-letter code: Acetate kinase (398 aa).

Asparagine 7 provides a ligand contact to Mg(2+). Residue lysine 14 coordinates ATP. Arginine 91 provides a ligand contact to substrate. Aspartate 148 (proton donor/acceptor) is an active-site residue. ATP is bound by residues 208 to 212 (HLGNG), 282 to 284 (DFR), and 330 to 334 (GVGEN). Glutamate 383 contributes to the Mg(2+) binding site.

Belongs to the acetokinase family. As to quaternary structure, homodimer. Mg(2+) is required as a cofactor. The cofactor is Mn(2+).

It localises to the cytoplasm. It catalyses the reaction acetate + ATP = acetyl phosphate + ADP. Its pathway is metabolic intermediate biosynthesis; acetyl-CoA biosynthesis; acetyl-CoA from acetate: step 1/2. Its function is as follows. Catalyzes the formation of acetyl phosphate from acetate and ATP. Can also catalyze the reverse reaction. The polypeptide is Acetate kinase (Carboxydothermus hydrogenoformans (strain ATCC BAA-161 / DSM 6008 / Z-2901)).